The following is a 151-amino-acid chain: U-scoloptoxin(17)-Er2a (151 aa).

The signal sequence occupies residues 1 to 22; sequence MKSFFVVFAIVFQATLVALSLA.

Belongs to the scoloptoxin-17 family. Contains 5 disulfide bonds. Expressed by the venom gland.

The protein resides in the secreted. The sequence is that of U-scoloptoxin(17)-Er2a from Ethmostigmus rubripes (Giant centipede).